Here is a 463-residue protein sequence, read N- to C-terminus: MMQKKLLLIVSIILNLVFTIHILYYSSTTWNPTWTNRAAAEAETVASFSCSGHGRAFVDGLGVLDGQKPPCECNNCYIGKDCSVLLKDCPVDANSGDPLFLEPFWMRQAERSAILVSGWHRMSYIYEDGTYVSRELEKVIRKLHSVVGNAVTDNRFVIFGSGTTQLLAAAVHALSLTNSSVSSPARLLTSIPYYAMYKDQAEFFDSAHLKFEGNASAWKQSGRNDNITQVIEVVTSPNNPDGKLKRAVLDGPNVKTLHDYAYYWPHFSPITHPVDEDLSLFSLSKTTGHAGSRFGWGLVKDKAIYEKMDRFIRLTSMGVSKETQLHVLQLLKVVVGDGGNEIFSFGYGTVKKRWETLNKIFSMSTRFSLQTIKPEYCNYFKKVREFTPSYAWVKCERPEDTNCYEIFRAAKITGRNGNVFGSEERFVRLSLIRSQDDFDQLIAMLKKLVYHEEDVPSENFMYI.

A helical membrane pass occupies residues 6–26; that stretch reads LLLIVSIILNLVFTIHILYYS. Pyridoxal 5'-phosphate contacts are provided by residues Tyr-124, 163–164, Asn-239, 259–262, 282–285, and Arg-293; these read TT, DYAY, and SLSK. At Lys-285 the chain carries N6-(pyridoxal phosphate)lysine.

It belongs to the alliinase family. Pyridoxal 5'-phosphate is required as a cofactor.

It localises to the membrane. Its function is as follows. Probable aminotransferase. The polypeptide is Tryptophan aminotransferase-related protein 4 (TAR4) (Arabidopsis thaliana (Mouse-ear cress)).